Reading from the N-terminus, the 316-residue chain is tRNA uridine(34) hydroxylase (316 aa).

In terms of domain architecture, Rhodanese spans 123–217 (LSDDTVVIDA…YGKDPETKGE (95 aa)). The active-site Cysteine persulfide intermediate is the Cys-177.

This sequence belongs to the TrhO family.

It carries out the reaction uridine(34) in tRNA + AH2 + O2 = 5-hydroxyuridine(34) in tRNA + A + H2O. Its function is as follows. Catalyzes oxygen-dependent 5-hydroxyuridine (ho5U) modification at position 34 in tRNAs. This Staphylococcus saprophyticus subsp. saprophyticus (strain ATCC 15305 / DSM 20229 / NCIMB 8711 / NCTC 7292 / S-41) protein is tRNA uridine(34) hydroxylase.